A 397-amino-acid polypeptide reads, in one-letter code: MTNAIDELQAIIAELKTEVEEQRAVIRQSRDRIEHMSAEVVDSNPYSRLMALQRMNIVKNYERIRDKTVAIVGVGGVGSVTADMLTRCGIGKLILFDYDKVELANMNRLFFTPDQAGLSKVEAAARTLTFINPDVRIETHNYNITTIDNFDNFLSTITGDGTVAGEPVDLVLSCVDNFEARMAINAACNEKCLNWFESGVSENAVSGHIQFLRPGDTACFACAPPLVVAENIDEKTLKREGVCAASLPTTMGITAGFLVQNALKYLLNFGEVSDYLGYNALNDFFPKMTLKPNPQCDDRNCLLRQKEFQARPKPVVVQEEAPTDEPLHASNDWGIELVAEDAPSDAPTDLSQSTDVGQGLRLAYEAPEKSSAEATQAATAPVDDTSLEDLMAQMKSM.

Residues glycine 76, aspartate 97, lysine 120, asparagine 143, and asparagine 177 each coordinate ATP. The Zn(2+) site is built by cysteine 219 and cysteine 222. Cysteine 243 (glycyl thioester intermediate) is an active-site residue. Residues cysteine 296 and cysteine 301 each contribute to the Zn(2+) site. Residues 343-384 (PSDAPTDLSQSTDVGQGLRLAYEAPEKSSAEATQAATAPVDD) form a disordered region.

Belongs to the ubiquitin-activating E1 family. UBA5 subfamily.

Functionally, E1-like enzyme which activates UFM1. This Drosophila pseudoobscura pseudoobscura (Fruit fly) protein is Ubiquitin-like modifier-activating enzyme 5.